Here is a 555-residue protein sequence, read N- to C-terminus: Phosphoglucomutase (555 aa).

Substrate-binding positions include threonine 45, arginine 49, 148-149 (SH), and lysine 158. The active-site Phosphoserine intermediate is the serine 148. Mg(2+) is bound at residue serine 148. The Mg(2+) site is built by aspartate 306, aspartate 308, and aspartate 310. Substrate contacts are provided by residues 310–311 (DR) and 393–395 (EES).

It belongs to the phosphohexose mutase family. It depends on Mg(2+) as a cofactor.

It catalyses the reaction alpha-D-glucose 1-phosphate = alpha-D-glucose 6-phosphate. This enzyme participates in both the breakdown and synthesis of glucose. This chain is Phosphoglucomutase (celB), found in Komagataeibacter xylinus (Gluconacetobacter xylinus).